We begin with the raw amino-acid sequence, 274 residues long: MGIRKLKPTTPGQRHKVIGAFDKITASTPEKSLVVGKKKTGGRNNTGKMTMRYIGGGHKQKYRFIDFKRTKDGIPATVKTIEYDPNRSSRIALLYYADGAKAYIIAPDGLEVGHTVMSGSEAAPEVGNALPLANIPVGTIIHNIELRPGQGAKMVRSAGSFAQLTSREGTYVVIKMPSGEVRRILSTCKATIGSVGNSDHALEKSGKAGRSRWLGRRPHNRGVVMNPVDHPMGGGEGRQSGGHPRSRKGLYAKGLKTRAPKKHSSKYIIERRKK.

Residues 197-274 (NSDHALEKSG…SKYIIERRKK (78 aa)) form a disordered region. Composition is skewed to basic residues over residues 207-220 (KAGR…RPHN) and 244-274 (PRSR…RRKK).

This sequence belongs to the universal ribosomal protein uL2 family. As to quaternary structure, part of the 50S ribosomal subunit. Forms a bridge to the 30S subunit in the 70S ribosome.

Functionally, one of the primary rRNA binding proteins. Required for association of the 30S and 50S subunits to form the 70S ribosome, for tRNA binding and peptide bond formation. It has been suggested to have peptidyltransferase activity; this is somewhat controversial. Makes several contacts with the 16S rRNA in the 70S ribosome. In Porphyromonas gingivalis (strain ATCC BAA-308 / W83), this protein is Large ribosomal subunit protein uL2.